Reading from the N-terminus, the 939-residue chain is Translation initiation factor IF-2 (939 aa).

A compositionally biased stretch (basic and acidic residues) spans 81–94; sequence EEQSRKAYEKEQQL. Disordered stretches follow at residues 81–303 and 316–337; these read EEQS…KKVE and TISG…KMRR. The span at 99 to 108 shows a compositional bias: low complexity; it reads SSAPSPAPAA. 2 stretches are compositionally biased toward basic and acidic residues: residues 112 to 127 and 148 to 173; these read EPVK…RHEP and SPKE…EKAA. The span at 178–189 shows a compositional bias: low complexity; it reads EAQPEAQSQQEP. A compositionally biased stretch (basic and acidic residues) spans 244 to 255; sequence FKENAAELKDEF. Residues 276 to 287 are compositionally biased toward low complexity; sequence AAGEGESTTGGE. Residues 292–301 show a composition bias toward basic residues; it reads KKKKGKKKKK. A compositionally biased stretch (low complexity) spans 318–328; the sequence is SGMDDSGSSGS. The tr-type G domain occupies 436–606; that stretch reads TRPPVVTIMG…LTEAEVRELK (171 aa). A G1 region spans residues 445–452; it reads GHVDHGKT. 445–452 contacts GTP; it reads GHVDHGKT. The interval 470–474 is G2; sequence GITQH. A G3 region spans residues 492–495; it reads DTPG. Residues 492-496 and 546-549 contribute to the GTP site; these read DTPGH and NKID. The tract at residues 546 to 549 is G4; that stretch reads NKID. The tract at residues 582–584 is G5; sequence SAK.

The protein belongs to the TRAFAC class translation factor GTPase superfamily. Classic translation factor GTPase family. IF-2 subfamily.

It is found in the cytoplasm. Functionally, one of the essential components for the initiation of protein synthesis. Protects formylmethionyl-tRNA from spontaneous hydrolysis and promotes its binding to the 30S ribosomal subunits. Also involved in the hydrolysis of GTP during the formation of the 70S ribosomal complex. This Chlorobaculum parvum (strain DSM 263 / NCIMB 8327) (Chlorobium vibrioforme subsp. thiosulfatophilum) protein is Translation initiation factor IF-2.